The sequence spans 375 residues: Succinyl-diaminopimelate desuccinylase (375 aa).

His66 lines the Zn(2+) pocket. Asp68 is an active-site residue. Asp99 provides a ligand contact to Zn(2+). Glu133 serves as the catalytic Proton acceptor. 3 residues coordinate Zn(2+): Glu134, Glu162, and His348.

The protein belongs to the peptidase M20A family. DapE subfamily. As to quaternary structure, homodimer. Zn(2+) is required as a cofactor. The cofactor is Co(2+).

It catalyses the reaction N-succinyl-(2S,6S)-2,6-diaminopimelate + H2O = (2S,6S)-2,6-diaminopimelate + succinate. The protein operates within amino-acid biosynthesis; L-lysine biosynthesis via DAP pathway; LL-2,6-diaminopimelate from (S)-tetrahydrodipicolinate (succinylase route): step 3/3. Catalyzes the hydrolysis of N-succinyl-L,L-diaminopimelic acid (SDAP), forming succinate and LL-2,6-diaminopimelate (DAP), an intermediate involved in the bacterial biosynthesis of lysine and meso-diaminopimelic acid, an essential component of bacterial cell walls. In Aeromonas salmonicida (strain A449), this protein is Succinyl-diaminopimelate desuccinylase.